A 312-amino-acid chain; its full sequence is GDSL esterase/lipase At2g38180 (312 aa).

Residues 1–22 (MVGPVRPQIVLFGSSIVQYSFT) form the signal peptide. N-linked (GlcNAc...) asparagine glycosylation occurs at asparagine 79. Residues 285-312 (EPPHPVSLCDHELTQNEQLEPPQPTARL) are disordered.

Belongs to the 'GDSL' lipolytic enzyme family.

The protein localises to the secreted. This chain is GDSL esterase/lipase At2g38180, found in Arabidopsis thaliana (Mouse-ear cress).